The primary structure comprises 127 residues: DNA-directed RNA polymerases I, II, and III subunit RPABC2 (127 aa).

The segment covering 1–32 has biased composition (acidic residues); sequence MSDNEDNFDGDDFDDVEEDEGLDDLENAEEEG. The tract at residues 1 to 52 is disordered; it reads MSDNEDNFDGDDFDDVEEDEGLDDLENAEEEGQVNVEILPSGERPQANQKRI. Ser2 carries the N-acetylserine modification. Ser2 is modified (phosphoserine; by CK2).

This sequence belongs to the archaeal Rpo6/eukaryotic RPB6 RNA polymerase subunit family. In terms of assembly, component of the RNA polymerase I (Pol I), RNA polymerase II (Pol II) and RNA polymerase III (Pol III) complexes consisting of at least 13, 12 and 17 subunits, respectively. Pol I complex consists of a ten-subunit catalytic core composed of POLR1A/RPA1, POLR1B/RPA2, POLR1C/RPAC1, POLR1D/RPAC2, POLR1H/RPA12, POLR2E/RPABC1, POLR2F/RPABC2, POLR2H/RPABC3, POLR2K/RPABC4 and POLR2L/RPABC5; a mobile stalk subunit POLR1F/RPA43 protruding from the core and additional subunits homologous to general transcription factors POLR1E/RPA49 and POLR1G/RPA34. Part of Pol I pre-initiation complex (PIC), in which Pol I core assembles with RRN3 and promoter-bound UTBF and SL1/TIF-IB complex. Pol II complex contains a ten-subunit catalytic core composed of POLR2A/RPB1, POLR2B/RPB2, POLR2C/RPB3, POLR2I/RPB9, POLR2J/RPB11, POLR2E/RPABC1, POLR2F/RPABC2, POLR2H/RPABC3, POLR2K/RPABC4 and POLR2L/RPABC5 and a mobile stalk composed of two subunits POLR2D/RPB4 and POLR2G/RPB7. Part of Pol II(G) complex, in which Pol II core associates with an additional subunit POLR2M; unlike conventional Pol II, Pol II(G) functions as a transcriptional repressor. Part of TBP-based Pol II pre-initiation complex (PIC), in which Pol II core assembles with general transcription factors and other specific initiation factors including GTF2E1, GTF2E2, GTF2F1, GTF2F2, TCEA1, ERCC2, ERCC3, GTF2H2, GTF2H3, GTF2H4, GTF2H5, GTF2A1, GTF2A2, GTF2B and TBP; this large multi-subunit PIC complex mediates DNA unwinding and targets Pol II core to the transcription start site where the first phosphodiester bond forms. Pol III complex consists of a ten-subunit catalytic core composed of POLR3A/RPC1, POLR3B/RPC2, POLR1C/RPAC1, POLR1D/RPAC2, POLR3K/RPC10, POLR2E/RPABC1, POLR2F/RPABC2, POLR2H/RPABC3, POLR2K/RPABC4 and POLR2L/RPABC5; a mobile stalk composed of two subunits POLR3H/RPC8 and CRCP/RPC9, protruding from the core and functioning primarily in transcription initiation; and additional subunits homologous to general transcription factors of the RNA polymerase II machinery, POLR3C/RPC3-POLR3F/RPC6-POLR3G/RPC7 heterotrimer required for transcription initiation and POLR3D/RPC4-POLR3E/RPC5 heterodimer involved in both transcription initiation and termination.

It is found in the nucleus. The protein resides in the nucleolus. DNA-dependent RNA polymerase catalyzes the transcription of DNA into RNA using the four ribonucleoside triphosphates as substrates. Common component of RNA polymerases I, II, and III which synthesize ribosomal RNA precursors, mRNA precursors and many functional non-coding RNAs, and small RNAs, such as 5S rRNA and tRNAs, respectively. Pol II is the central component of the basal RNA polymerase II transcription machinery. Pols are composed of mobile elements that move relative to each other. In Pol II, POLR2F/RPABC2 is part of the clamp element and together with parts of POLR2A/RPB1 and POLR2B/RPB2 forms a pocket to which the POLR2D/RPB4-POLR2G/RPB7 subcomplex binds. In Bos taurus (Bovine), this protein is DNA-directed RNA polymerases I, II, and III subunit RPABC2 (POLR2F).